We begin with the raw amino-acid sequence, 448 residues long: Solute carrier family 52, riboflavin transporter, member 1 (448 aa).

Transmembrane regions (helical) follow at residues 14–34 (LLVA…WVEL), 47–67 (LPSY…VVTL), 79–99 (VPIQ…APLW), 124–144 (ACCT…PPFL), and 147–167 (FFLG…VQGV). N178 carries N-linked (GlcNAc...) asparagine glycosylation. A helical membrane pass occupies residues 191 to 211 (FPASTFFWALTALLVTSAAAF). The interval 225–267 (TTGGSGPELQLGSPGAEEEEKEEEEALPLQEPPSQAAGTIPGP) is disordered. The segment covering 240 to 250 (AEEEEKEEEEA) has biased composition (acidic residues). 5 helical membrane passes run 280 to 300 (AFLL…LPSV), 315 to 335 (LAVV…MGVL), 342 to 362 (LVGL…LAIL), 369 to 389 (VGTT…LCVF), and 407 to 427 (ALLA…GAMF).

It belongs to the riboflavin transporter family. Widely expressed. Highly expressed in the testis, placenta and small intestine. Expressed at lower level in other tissues.

It is found in the cell membrane. The catalysed reaction is riboflavin(in) = riboflavin(out). The activity is strongly inhibited by riboflavin analogs, such as lumiflavin. Weakly inhibited by flavin adenine dinucleotide (FAD). In terms of biological role, plasma membrane transporter mediating the uptake by cells of the water soluble vitamin B2/riboflavin that plays a key role in biochemical oxidation-reduction reactions of the carbohydrate, lipid, and amino acid metabolism. Humans are unable to synthesize vitamin B2/riboflavin and must obtain it via intestinal absorption. Its function is as follows. (Microbial infection) May function as a cell receptor to retroviral envelopes similar to the porcine endogenous retrovirus (PERV-A). This chain is Solute carrier family 52, riboflavin transporter, member 1, found in Homo sapiens (Human).